The primary structure comprises 273 residues: Large ribosomal subunit protein uL2cz/uL2cy (273 aa).

2 disordered regions span residues 1 to 23 (MAIHLYKTSTPSTRNGAVDSQVK) and 223 to 273 (NPVD…RRSK).

This sequence belongs to the universal ribosomal protein uL2 family. In terms of assembly, part of the 50S ribosomal subunit.

The protein resides in the plastid. Its subcellular location is the chloroplast. The chain is Large ribosomal subunit protein uL2cz/uL2cy (rpl2-A) from Oenothera argillicola (Appalachian evening primrose).